Consider the following 169-residue polypeptide: MASIAVCPGSFDPVTYGHLDIIRRGAKVFDQVYVAVLNNSSKKPLFSVEERIELLREVTRPFPNVIVESFHGLLVDYARSKNASAILRGLRAVSDFEYEMQITSMNRVLDENIETFFMMTNSQYAFLSSSIVKEVAKYNGNISDLVPPVVEEALRKKFASLTSNERNES.

Substrate is bound at residue Ser-10. ATP is bound by residues 10-11 and His-18; that span reads SF. Lys-42, Leu-74, and Arg-88 together coordinate substrate. Residues 89 to 91, Glu-99, and 124 to 130 contribute to the ATP site; these read GLR and YAFLSSS.

It belongs to the bacterial CoaD family. Homohexamer. It depends on Mg(2+) as a cofactor.

The protein resides in the cytoplasm. It carries out the reaction (R)-4'-phosphopantetheine + ATP + H(+) = 3'-dephospho-CoA + diphosphate. The protein operates within cofactor biosynthesis; coenzyme A biosynthesis; CoA from (R)-pantothenate: step 4/5. Reversibly transfers an adenylyl group from ATP to 4'-phosphopantetheine, yielding dephospho-CoA (dPCoA) and pyrophosphate. This chain is Phosphopantetheine adenylyltransferase, found in Geobacillus sp. (strain WCH70).